The sequence spans 73 residues: MRRFFTTLLLLPVYFYKYCISLMTPASCRYTPTCSEYAVQALKKYGPVKGLYLAVKRILRCHPWGGSGYDPVP.

The protein belongs to the UPF0161 family.

It localises to the cell inner membrane. Functionally, could be involved in insertion of integral membrane proteins into the membrane. This chain is Putative membrane protein insertion efficiency factor, found in Parabacteroides distasonis (strain ATCC 8503 / DSM 20701 / CIP 104284 / JCM 5825 / NCTC 11152).